Consider the following 260-residue polypeptide: Putative nudix hydrolase 6 (260 aa).

The 145-residue stretch at 113–257 (PNHAADPIVS…SHFIDLLKES (145 aa)) folds into the Nudix hydrolase domain. Positions 148 to 170 (GMVDAGEHVSQTLRREFAEEAMH) match the Nudix box motif. 2 residues coordinate Mg(2+): E163 and E167.

The protein belongs to the Nudix hydrolase family. The cofactor is Mg(2+). It depends on Mn(2+) as a cofactor.

In terms of biological role, probably mediates the hydrolysis of some nucleoside diphosphate derivatives. This Caenorhabditis elegans protein is Putative nudix hydrolase 6 (ndx-6).